A 268-amino-acid polypeptide reads, in one-letter code: Thiazole synthase (268 aa).

The active-site Schiff-base intermediate with DXP is Lys96. 1-deoxy-D-xylulose 5-phosphate-binding positions include Gly157, 185-186 (AG), and 207-208 (NT). The disordered stretch occupies residues 238 to 268 (PMRPREAASPSSPVEGVPFTPTGPRPGRGPQ). Over residues 258-268 (PTGPRPGRGPQ) the composition is skewed to pro residues.

It belongs to the ThiG family. Homotetramer. Forms heterodimers with either ThiH or ThiS.

Its subcellular location is the cytoplasm. The enzyme catalyses [ThiS sulfur-carrier protein]-C-terminal-Gly-aminoethanethioate + 2-iminoacetate + 1-deoxy-D-xylulose 5-phosphate = [ThiS sulfur-carrier protein]-C-terminal Gly-Gly + 2-[(2R,5Z)-2-carboxy-4-methylthiazol-5(2H)-ylidene]ethyl phosphate + 2 H2O + H(+). It functions in the pathway cofactor biosynthesis; thiamine diphosphate biosynthesis. Catalyzes the rearrangement of 1-deoxy-D-xylulose 5-phosphate (DXP) to produce the thiazole phosphate moiety of thiamine. Sulfur is provided by the thiocarboxylate moiety of the carrier protein ThiS. In vitro, sulfur can be provided by H(2)S. The chain is Thiazole synthase from Thermus thermophilus (strain ATCC 27634 / DSM 579 / HB8).